We begin with the raw amino-acid sequence, 280 residues long: Undecaprenyl-diphosphatase (280 aa).

The next 8 helical transmembrane spans lie at 3–23 (IILL…EFLP), 45–65 (VDLF…YDYW), 88–108 (QLGL…FTFA), 115–135 (LFNP…IFYV), 150–170 (VSLK…IPGT), 191–211 (AEFS…LDFI), 225–245 (VLGI…RLLV), and 255–275 (IFAW…WGFG).

The protein belongs to the UppP family.

The protein resides in the cell inner membrane. It catalyses the reaction di-trans,octa-cis-undecaprenyl diphosphate + H2O = di-trans,octa-cis-undecaprenyl phosphate + phosphate + H(+). In terms of biological role, catalyzes the dephosphorylation of undecaprenyl diphosphate (UPP). Confers resistance to bacitracin. The chain is Undecaprenyl-diphosphatase from Psychrobacter cryohalolentis (strain ATCC BAA-1226 / DSM 17306 / VKM B-2378 / K5).